We begin with the raw amino-acid sequence, 413 residues long: ATP phosphoribosyltransferase 2, chloroplastic (413 aa).

A chloroplast-targeting transit peptide spans Met-1–Val-57.

Belongs to the ATP phosphoribosyltransferase family. Long subfamily. Mg(2+) is required as a cofactor.

The protein localises to the plastid. It localises to the chloroplast. It carries out the reaction 1-(5-phospho-beta-D-ribosyl)-ATP + diphosphate = 5-phospho-alpha-D-ribose 1-diphosphate + ATP. Its pathway is amino-acid biosynthesis; L-histidine biosynthesis; L-histidine from 5-phospho-alpha-D-ribose 1-diphosphate: step 1/9. Its activity is regulated as follows. Feedback inhibited by L-histidine. In terms of biological role, catalyzes the condensation of ATP and 5-phosphoribose 1-diphosphate to form N'-(5'-phosphoribosyl)-ATP (PR-ATP). The polypeptide is ATP phosphoribosyltransferase 2, chloroplastic (HISN1B) (Arabidopsis thaliana (Mouse-ear cress)).